A 1231-amino-acid polypeptide reads, in one-letter code: Multifunctional 2-oxoglutarate metabolism enzyme (1231 aa).

The 2-oxoglutarate dehydrogenase E1, N-terminal part stretch occupies residues methionine 1–serine 41. A disordered region spans residues valine 38–alanine 79. A linker region spans residues proline 42–alanine 88. Positions proline 58 to proline 69 are enriched in low complexity. Positions leucine 89–serine 337 are succinyltransferase E2. The Proton acceptor; for succinyltransferase activity role is filled by histidine 316. The tract at residues aspartate 338–glycine 1231 is 2-oxoglutarate dehydrogenase E1, C-terminal part. Residue arginine 542 coordinates thiamine diphosphate. Residues histidine 581 and serine 606 each coordinate 2-oxoglutarate. 6 residues coordinate thiamine diphosphate: serine 606, leucine 608, aspartate 649, alanine 650, alanine 651, and asparagine 682. Residue aspartate 649 coordinates Mg(2+). Mg(2+) contacts are provided by asparagine 682 and isoleucine 684. Positions aspartate 787 to histidine 817 form a coiled coil. Histidine 1024 contacts 2-oxoglutarate. 7 residues coordinate acetyl-CoA: threonine 1042, arginine 1058, lysine 1093, serine 1096, glutamine 1146, arginine 1153, and arginine 1154.

It belongs to the 2-oxoacid dehydrogenase family. Kgd subfamily. As to quaternary structure, homodimer. The 2-oxoglutarate dehydrogenase (ODH) complex contains multiple copies of three enzymatic components: 2-oxoglutarate dehydrogenase (E1), dihydrolipoamide succinyltransferase (E2) and lipoamide dehydrogenase (E3). Requires Mg(2+) as cofactor. The cofactor is thiamine diphosphate.

It catalyses the reaction glyoxylate + 2-oxoglutarate + H(+) = 2-hydroxy-3-oxoadipate + CO2. It carries out the reaction 2-oxoglutarate + H(+) = succinate semialdehyde + CO2. The catalysed reaction is N(6)-[(R)-lipoyl]-L-lysyl-[protein] + 2-oxoglutarate + H(+) = N(6)-[(R)-S(8)-succinyldihydrolipoyl]-L-lysyl-[protein] + CO2. The enzyme catalyses N(6)-[(R)-dihydrolipoyl]-L-lysyl-[protein] + succinyl-CoA = N(6)-[(R)-S(8)-succinyldihydrolipoyl]-L-lysyl-[protein] + CoA. It functions in the pathway carbohydrate metabolism; tricarboxylic acid cycle; succinate from 2-oxoglutarate (transferase route): step 1/2. The protein operates within carbohydrate metabolism; tricarboxylic acid cycle; succinyl-CoA from 2-oxoglutarate (dehydrogenase route): step 1/1. Alpha-ketoglutarate dehydrogenase and decarboxylase activities are inhibited by unphosphorylated GarA, and allosterically activated by acetyl-CoA, the main substrate of the TCA cycle. In terms of biological role, shows three enzymatic activities that share a first common step, the attack of thiamine-PP on 2-oxoglutarate (alpha-ketoglutarate, KG), leading to the formation of an enamine-thiamine-PP intermediate upon decarboxylation. Thus, displays KGD activity, catalyzing the decarboxylation from five-carbon 2-oxoglutarate to four-carbon succinate semialdehyde (SSA). Also catalyzes C-C bond formation between the activated aldehyde formed after decarboxylation of alpha-ketoglutarate and the carbonyl of glyoxylate (GLX), to yield 2-hydroxy-3-oxoadipate (HOA), which spontaneously decarboxylates to form 5-hydroxylevulinate (HLA). And is also a component of the 2-oxoglutarate dehydrogenase (ODH) complex, that catalyzes the overall conversion of 2-oxoglutarate to succinyl-CoA and CO(2). The KG decarboxylase and KG dehydrogenase reactions provide two alternative, tightly regulated, pathways connecting the oxidative and reductive branches of the TCA cycle. The chain is Multifunctional 2-oxoglutarate metabolism enzyme (kgd) from Mycobacterium tuberculosis (strain ATCC 25177 / H37Ra).